Reading from the N-terminus, the 116-residue chain is Host transcription reprogramming factor 4 (116 aa).

The N-terminal stretch at 1–24 is a signal peptide; sequence MHIIHISKFMALLAISTIAIPTRG. Residues 24 to 53 are disordered; sequence GRSEVDSRDVNQAQTVTSGSSIAPSGSEKR. Residues 33–47 are compositionally biased toward polar residues; sequence VNQAQTVTSGSSIAP. A C2H2-type; degenerate zinc finger spans residues 74–96; it reads FQCPHCKDGISNRVALYTHVKAF.

The protein localises to the secreted. The protein resides in the host nucleus. Probable secreted effector that translocates into the nuclei of host cells to reprogram the expression of targeted genes by binding on effector binding elements in rice. This chain is Host transcription reprogramming factor 4, found in Pyricularia oryzae (strain 70-15 / ATCC MYA-4617 / FGSC 8958) (Rice blast fungus).